The following is a 109-amino-acid chain: Large ribosomal subunit protein uL22 (109 aa).

Over residues 84–95 (ARGTASRIRKPT) the composition is skewed to basic residues. Positions 84 to 109 (ARGTASRIRKPTSHIMVEVSKPSKEA) are disordered.

It belongs to the universal ribosomal protein uL22 family. In terms of assembly, part of the 50S ribosomal subunit.

Functionally, this protein binds specifically to 23S rRNA; its binding is stimulated by other ribosomal proteins, e.g. L4, L17, and L20. It is important during the early stages of 50S assembly. It makes multiple contacts with different domains of the 23S rRNA in the assembled 50S subunit and ribosome. In terms of biological role, the globular domain of the protein is located near the polypeptide exit tunnel on the outside of the subunit, while an extended beta-hairpin is found that lines the wall of the exit tunnel in the center of the 70S ribosome. This Campylobacter hominis (strain ATCC BAA-381 / DSM 21671 / CCUG 45161 / LMG 19568 / NCTC 13146 / CH001A) protein is Large ribosomal subunit protein uL22.